A 443-amino-acid chain; its full sequence is MANQPSVAVAHLGCEKNRVDTEHMLGLLVEAGYPVDSDEAFADYVIVNTCSFIQAAREESVRTLVELAEANKKIVITGCMAQHFQEELLEELPEAVALVGTGDYHKIVDVIQRAEAGERVKEVSPEPTYIADETVPRYRTTTEGTAYVRIAEGCDYGCAFCIIPHLRGKQRSRSIESIVAEAQQLAAEGVQELILISQITTNYGIDLYGKPQLAELLRALGEVDVPWIRMHYAYPTGLTPEVMAAIQETDNVLPYLDLPLQHSHPEVLRAMNRPWQGQVNDQIIEKIKTALPDAVLRTTFIVGFPGETDEHFEHLCEFVQRHEFDHVGVFTFSPEEGTPAFDLPNQLPQDVMDARRDRLMALQQPISWQQNQQEVGKTVQVLIEQEHPGSGQLIGRSPRFSADVDGLVYIDPGEAPSPRLGSLTPVQITDADAYDLQGQLVSQ.

Residues 5–116 (PSVAVAHLGC…IVDVIQRAEA (112 aa)) enclose the MTTase N-terminal domain. [4Fe-4S] cluster-binding residues include cysteine 14, cysteine 50, cysteine 79, cysteine 154, cysteine 158, and cysteine 161. One can recognise a Radical SAM core domain in the interval 140 to 370 (TTTEGTAYVR…ALQQPISWQQ (231 aa)). The region spanning 372 to 442 (QQEVGKTVQV…AYDLQGQLVS (71 aa)) is the TRAM domain.

This sequence belongs to the methylthiotransferase family. RimO subfamily. The cofactor is [4Fe-4S] cluster.

It is found in the cytoplasm. It catalyses the reaction L-aspartate(89)-[ribosomal protein uS12]-hydrogen + (sulfur carrier)-SH + AH2 + 2 S-adenosyl-L-methionine = 3-methylsulfanyl-L-aspartate(89)-[ribosomal protein uS12]-hydrogen + (sulfur carrier)-H + 5'-deoxyadenosine + L-methionine + A + S-adenosyl-L-homocysteine + 2 H(+). Its function is as follows. Catalyzes the methylthiolation of an aspartic acid residue of ribosomal protein uS12. The sequence is that of Ribosomal protein uS12 methylthiotransferase RimO from Acaryochloris marina (strain MBIC 11017).